Here is a 411-residue protein sequence, read N- to C-terminus: MLNILPFFLFFLPFLIGNNRICVAVKTGFVGRNGTQFVLNGEQVYLNGFNAYWMMTTAADTASKGRATVTTALRQASAVGMNVARIWGFNEGDYIPLQISPGSYSEDVFKGLDFVVYEAGRFNIKLIISLVNNFEDYGGRKKYVEWAGLDEPDEFYTNSAVKQFYKNHVKTVLTRKNTITGRMYKDDPTIFSWELINEPRCNDSTASNILQDWVKEMASYVKSIDSNHLLEIGLEGFYGESIPERTVYNPGGRVLTGTDFITNNQIPDIDFATIHIYPDSWLPLQSSRTGEQDTFVDRWIGAHIEDCDNIIKKPLLITEFGKSSKYPGFSLEKRNKFFQRVYDVIYDSARAGGSCTGGVFWQLTTNRTGLLGDGYEVFMQAGPNTTAQLIADQSSKLKNLKYPPLVTHSAE.

The signal sequence occupies residues 1-17 (MLNILPFFLFFLPFLIG). The N-linked (GlcNAc...) asparagine glycan is linked to asparagine 33. Positions 87 and 197 each coordinate substrate. The active-site Proton donor is the glutamate 198. Asparagine 202 is a glycosylation site (N-linked (GlcNAc...) asparagine). Tyrosine 277 is a binding site for substrate. Glutamate 319 functions as the Nucleophile in the catalytic mechanism. Residue tryptophan 361 coordinates substrate. Asparagine 366 and asparagine 384 each carry an N-linked (GlcNAc...) asparagine glycan.

The protein belongs to the glycosyl hydrolase 5 (cellulase A) family. As to expression, expressed in roots, stems and flowers.

The protein resides in the secreted. The enzyme catalyses Random hydrolysis of (1-&gt;4)-beta-D-mannosidic linkages in mannans, galactomannans and glucomannans.. The chain is Mannan endo-1,4-beta-mannosidase 1 (MAN1) from Arabidopsis thaliana (Mouse-ear cress).